A 70-amino-acid chain; its full sequence is Large ribosomal subunit protein uL29 (70 aa).

Belongs to the universal ribosomal protein uL29 family.

In Clostridium botulinum (strain Eklund 17B / Type B), this protein is Large ribosomal subunit protein uL29.